The primary structure comprises 541 residues: Membrane protein insertase YidC (541 aa).

5 helical membrane-spanning segments follow: residues 7–27, 345–365, 415–435, 453–473, and 492–512; these read LLFM…QVDY, LVQN…AILY, LGGC…YWTF, LSAQ…MFLL, and FMPL…VLYW.

This sequence belongs to the OXA1/ALB3/YidC family. Type 1 subfamily. As to quaternary structure, interacts with the Sec translocase complex via SecD. Specifically interacts with transmembrane segments of nascent integral membrane proteins during membrane integration.

It is found in the cell inner membrane. Required for the insertion and/or proper folding and/or complex formation of integral membrane proteins into the membrane. Involved in integration of membrane proteins that insert both dependently and independently of the Sec translocase complex, as well as at least some lipoproteins. Aids folding of multispanning membrane proteins. The protein is Membrane protein insertase YidC of Histophilus somni (strain 129Pt) (Haemophilus somnus).